The sequence spans 870 residues: Leucine--tRNA ligase (870 aa).

The 'HIGH' region motif lies at 43-53; sequence PYPSGRIHMGH. A 'KMSKS' region motif is present at residues 630–634; sequence KMSKS. ATP is bound at residue lysine 633.

Belongs to the class-I aminoacyl-tRNA synthetase family.

It is found in the cytoplasm. The enzyme catalyses tRNA(Leu) + L-leucine + ATP = L-leucyl-tRNA(Leu) + AMP + diphosphate. The sequence is that of Leucine--tRNA ligase from Parvibaculum lavamentivorans (strain DS-1 / DSM 13023 / NCIMB 13966).